The following is an 83-amino-acid chain: Mu-theraphotoxin-Hhn2j 4 (83 aa).

The N-terminal stretch at 1–21 (MKASMFLALAGLVLLFVVGYA) is a signal peptide. Positions 22–48 (SESEEKEFPIELLSKIFAVDVFKGEGR) are excised as a propeptide. 3 disulfides stabilise this stretch: cysteine 50–cysteine 65, cysteine 57–cysteine 70, and cysteine 64–cysteine 77. The residue at position 81 (leucine 81) is a Leucine amide.

Belongs to the neurotoxin 10 (Hwtx-1) family. 15 (Hntx-3) subfamily. As to quaternary structure, monomer. As to expression, expressed by the venom gland.

It localises to the secreted. Functionally, lethal neurotoxin. Selectively blocks tetrodotoxin-sensitive voltage-gated sodium channels (Nav). Does not affect tetrodotoxin-resistant voltage-gated sodium channels or calcium channels. The polypeptide is Mu-theraphotoxin-Hhn2j 4 (Cyriopagopus hainanus (Chinese bird spider)).